The sequence spans 435 residues: ATP-dependent protease ATPase subunit HslU (435 aa).

ATP-binding positions include Ile18, 60 to 65 (GVGKTE), Asp248, Glu313, and Arg385.

Belongs to the ClpX chaperone family. HslU subfamily. As to quaternary structure, a double ring-shaped homohexamer of HslV is capped on each side by a ring-shaped HslU homohexamer. The assembly of the HslU/HslV complex is dependent on binding of ATP.

The protein localises to the cytoplasm. Its function is as follows. ATPase subunit of a proteasome-like degradation complex; this subunit has chaperone activity. The binding of ATP and its subsequent hydrolysis by HslU are essential for unfolding of protein substrates subsequently hydrolyzed by HslV. HslU recognizes the N-terminal part of its protein substrates and unfolds these before they are guided to HslV for hydrolysis. The sequence is that of ATP-dependent protease ATPase subunit HslU from Roseobacter denitrificans (strain ATCC 33942 / OCh 114) (Erythrobacter sp. (strain OCh 114)).